A 156-amino-acid polypeptide reads, in one-letter code: Riboflavin synthase (156 aa).

The protein belongs to the DMRL synthase family.

It carries out the reaction 2 6,7-dimethyl-8-(1-D-ribityl)lumazine + H(+) = 5-amino-6-(D-ribitylamino)uracil + riboflavin. Its pathway is cofactor biosynthesis; riboflavin biosynthesis; riboflavin from 2-hydroxy-3-oxobutyl phosphate and 5-amino-6-(D-ribitylamino)uracil: step 2/2. This is Riboflavin synthase (ribC) from Methanocaldococcus jannaschii (strain ATCC 43067 / DSM 2661 / JAL-1 / JCM 10045 / NBRC 100440) (Methanococcus jannaschii).